Consider the following 906-residue polypeptide: Protein translocase subunit SecA (906 aa).

ATP is bound by residues Gln86, 104–108 (GEGKT), and Asp499. Residues 862-887 (KPVVSRIDPKDRNPDDPTSWGRVSRN) form a disordered region. The Zn(2+) site is built by Cys890, Cys892, Cys901, and His902.

It belongs to the SecA family. In terms of assembly, monomer and homodimer. Part of the essential Sec protein translocation apparatus which comprises SecA, SecYEG and auxiliary proteins SecDF-YajC and YidC. It depends on Zn(2+) as a cofactor.

It localises to the cell inner membrane. Its subcellular location is the cytoplasm. The catalysed reaction is ATP + H2O + cellular proteinSide 1 = ADP + phosphate + cellular proteinSide 2.. Part of the Sec protein translocase complex. Interacts with the SecYEG preprotein conducting channel. Has a central role in coupling the hydrolysis of ATP to the transfer of proteins into and across the cell membrane, serving both as a receptor for the preprotein-SecB complex and as an ATP-driven molecular motor driving the stepwise translocation of polypeptide chains across the membrane. This chain is Protein translocase subunit SecA, found in Rickettsia peacockii (strain Rustic).